The primary structure comprises 242 residues: MRCFKATIAYDGAYFLGYAKQPNKLGVQDKIEDALNALGIKSVVIAAGRTDKGVHANNQVLSFHAPKHWNAAKLFYYLAPKLAPHIVLKKLEEKNFHARFDAQKRAYRYLLTKNLKTPFLAPYIACGDYGSLDALNTALKQFTGKHDFSMFKKEGGATTNPKRTIFNAFAYKTFIIGHECVVFKIIGDAFLRSSVRLIIQACVQYSLEKITLAEIQAQIHNLKATIRTPIMANGLYLHRVYY.

The active-site Nucleophile is the aspartate 51. Tyrosine 107 contributes to the substrate binding site.

This sequence belongs to the tRNA pseudouridine synthase TruA family. Homodimer.

The catalysed reaction is uridine(38/39/40) in tRNA = pseudouridine(38/39/40) in tRNA. In terms of biological role, formation of pseudouridine at positions 38, 39 and 40 in the anticodon stem and loop of transfer RNAs. The polypeptide is tRNA pseudouridine synthase A (Helicobacter pylori (strain ATCC 700392 / 26695) (Campylobacter pylori)).